Reading from the N-terminus, the 693-residue chain is Elongation factor G (693 aa).

The 275-residue stretch at Lys-8 to Leu-282 folds into the tr-type G domain. GTP contacts are provided by residues Ala-17–Thr-24, Asp-81–His-85, and Asn-135–Asp-138.

It belongs to the TRAFAC class translation factor GTPase superfamily. Classic translation factor GTPase family. EF-G/EF-2 subfamily.

The protein resides in the cytoplasm. In terms of biological role, catalyzes the GTP-dependent ribosomal translocation step during translation elongation. During this step, the ribosome changes from the pre-translocational (PRE) to the post-translocational (POST) state as the newly formed A-site-bound peptidyl-tRNA and P-site-bound deacylated tRNA move to the P and E sites, respectively. Catalyzes the coordinated movement of the two tRNA molecules, the mRNA and conformational changes in the ribosome. This Macrococcus caseolyticus (strain JCSC5402) (Macrococcoides caseolyticum) protein is Elongation factor G.